A 68-amino-acid chain; its full sequence is Non-disulfide-bridged peptide 5.6 (68 aa).

The first 23 residues, 1–23, serve as a signal peptide directing secretion; it reads MKTQVIIFIMAVVFLQLLSQSEA. Positions 37-68 are excised as a propeptide; it reads ELRNIDLDQFDDMFDEPEISAADMRFLQELLK.

This sequence belongs to the non-disulfide-bridged peptide (NDBP) superfamily. Short antimicrobial peptide (group 4) family. As to expression, expressed by the venom gland.

The protein resides in the secreted. The protein localises to the target cell membrane. Functionally, antibacterial peptide with activity against both Gram-positive and Gram-negative bacteria probably by forming pores in the cell membrane. Also has weak hemolytic activity. Does not show antifungal activity. This Hoffmannihadrurus gertschi (Scorpion) protein is Non-disulfide-bridged peptide 5.6.